A 224-amino-acid chain; its full sequence is Homeobox protein Hox-B6 (224 aa).

The Antp-type hexapeptide signature appears at 127-132; that stretch reads VYPWMQ. Positions 146-205 form a DNA-binding region, homeobox; sequence GRRGRQTYTRYQTLELEKEFHYNRYLTRRRRIEIAHALCLTERQIKIWFQNRRMKWKKES. Phosphoserine is present on S214.

This sequence belongs to the Antp homeobox family.

It is found in the nucleus. Functionally, sequence-specific transcription factor which is part of a developmental regulatory system that provides cells with specific positional identities on the anterior-posterior axis. The polypeptide is Homeobox protein Hox-B6 (HOXB6) (Homo sapiens (Human)).